The primary structure comprises 214 residues: Outer-membrane lipoprotein LolB (214 aa).

The first 30 residues, 1–30 (MKHVSSPHPCAAIASARVWLGLVLVALLAG), serve as a signal peptide directing secretion. Cys-31 is lipidated: N-palmitoyl cysteine. Residue Cys-31 is the site of S-diacylglycerol cysteine attachment.

The protein belongs to the LolB family. As to quaternary structure, monomer.

The protein resides in the cell outer membrane. Its function is as follows. Plays a critical role in the incorporation of lipoproteins in the outer membrane after they are released by the LolA protein. The protein is Outer-membrane lipoprotein LolB of Chromohalobacter salexigens (strain ATCC BAA-138 / DSM 3043 / CIP 106854 / NCIMB 13768 / 1H11).